A 710-amino-acid chain; its full sequence is FAST kinase domain-containing protein 2, mitochondrial (710 aa).

A phosphoserine mark is found at Ser-126 and Ser-140. Residues 634 to 691 (VAVLCVSRSAYCLGSSHPRGFLAMKMRHLNAMGFHVILVNNWEMDKLEMEDAVTFLKT) form the RAP domain. Ser-708 is modified (phosphoserine).

Belongs to the FAST kinase family. As to quaternary structure, monomer. Found in a complex with GRSF1, DDX28, DHX30 and FASTKD5. Associates with the 16S mitochondrial rRNA (16S mt-rRNA). Forms a regulatory protein-RNA complex, consisting of RCC1L, NGRN, RPUSD3, RPUSD4, TRUB2, FASTKD2 and 16S mt-rRNA. In terms of tissue distribution, expression detected in spleen, thymus, testis, ovary, colon, heart, smooth muscle, kidney, brain, lung, liver and white adipose tissue with highest expression in heart, smooth muscle and thyroid.

The protein localises to the mitochondrion matrix. It localises to the mitochondrion nucleoid. Its function is as follows. Plays an important role in assembly of the mitochondrial large ribosomal subunit. As a component of a functional protein-RNA module, consisting of RCC1L, NGRN, RPUSD3, RPUSD4, TRUB2, FASTKD2 and 16S mitochondrial ribosomal RNA (16S mt-rRNA), controls 16S mt-rRNA abundance and is required for intra-mitochondrial translation. May play a role in mitochondrial apoptosis. The polypeptide is FAST kinase domain-containing protein 2, mitochondrial (Homo sapiens (Human)).